The following is an 86-amino-acid chain: Myosin light chain alkali (86 aa).

One can recognise an EF-hand domain in the interval 11-46 (GCYEDFIECLKLYDKEENGTMMLAELQHALLALGES).

As to quaternary structure, myosin is a hexamer of 2 heavy chains and 4 light chains.

The sequence is that of Myosin light chain alkali (Mlc1) from Drosophila subobscura (Fruit fly).